Here is a 327-residue protein sequence, read N- to C-terminus: Zinc transport protein ZntB (327 aa).

The Cytoplasmic segment spans residues 1 to 273 (MEAIKGSEVN…ARRTYTMSLM (273 aa)). Residues 274-294 (AMVFLPSTFLTGLFGVNLGGI) form a helical membrane-spanning segment. At 295–300 (PGGAWH) the chain is on the periplasmic side. The helical transmembrane segment at 301 to 321 (FGFSMFCILLVVLIGGVTLWL) threads the bilayer. Residues 322-327 (HRSKWL) lie on the Cytoplasmic side of the membrane.

This sequence belongs to the CorA metal ion transporter (MIT) (TC 1.A.35) family.

The protein localises to the cell inner membrane. The catalysed reaction is Zn(2+)(out) + H(+)(out) = Zn(2+)(in) + H(+)(in). Functionally, zinc transporter. Acts as a Zn(2+):proton symporter, which likely mediates zinc ion uptake. The chain is Zinc transport protein ZntB from Citrobacter koseri (strain ATCC BAA-895 / CDC 4225-83 / SGSC4696).